The sequence spans 321 residues: Mas-related G-protein coupled receptor member H (321 aa).

Residues Met1–His35 lie on the Extracellular side of the membrane. N-linked (GlcNAc...) asparagine glycosylation is present at Asn23. A helical transmembrane segment spans residues Thr36 to Ile56. The Cytoplasmic segment spans residues Trp57–Tyr71. A helical membrane pass occupies residues Ile72–Val92. Over Asn93 to Leu102 the chain is Extracellular. A glycan (N-linked (GlcNAc...) asparagine) is linked at Asn99. The chain crosses the membrane as a helical span at residues Glu103–Val126. The Cytoplasmic portion of the chain corresponds to Glu127–Ser147. A helical membrane pass occupies residues Ala148–Phe168. The Extracellular segment spans residues Cys169–Cys188. A helical membrane pass occupies residues Ile189 to Gln209. The Cytoplasmic segment spans residues Val210 to Ile225. The chain crosses the membrane as a helical span at residues Ile226 to Ile246. Residue Gly247 is a topological domain, extracellular. A helical transmembrane segment spans residues Tyr248–Asn271. Residues Cys272 to Pro320 are Cytoplasmic-facing.

Belongs to the G-protein coupled receptor 1 family. Mas subfamily.

The protein resides in the cell membrane. Orphan receptor. May regulate nociceptor function and/or development, including the sensation or modulation of pain. The sequence is that of Mas-related G-protein coupled receptor member H (Mrgprh) from Mus musculus (Mouse).